Here is a 192-residue protein sequence, read N- to C-terminus: Ciliary microtubule inner protein 3 (192 aa).

The disordered stretch occupies residues 24-108; that stretch reads RAGAEGGPSL…SGQKVKAPHR (85 aa). The span at 55–64 shows a compositional bias: basic residues; sequence APRRPPRPRT.

It belongs to the CIMIP3-like family. In terms of tissue distribution, detected in the sperm flagellum (at protein level).

The protein localises to the cytoplasm. Its subcellular location is the cytoskeleton. It localises to the flagellum axoneme. The chain is Ciliary microtubule inner protein 3 from Bos taurus (Bovine).